Reading from the N-terminus, the 37-residue chain is Large ribosomal subunit protein bL36 (37 aa).

It belongs to the bacterial ribosomal protein bL36 family.

In Bacillus pumilus (strain SAFR-032), this protein is Large ribosomal subunit protein bL36.